The chain runs to 652 residues: Putative glycine--tRNA ligase (652 aa).

Residues 119–145 form a disordered region; it reads GDKEARGQNSNDQPEESDDKKKRKKKV. Residue Glu221 participates in glycine binding. ATP is bound by residues 253–255 and 264–265; these read RNE and RV. Glu272 serves as a coordination point for glycine. 380–381 is an ATP binding site; it reads EC. 499–501 contacts glycine; sequence EPS. Arg506 is a binding site for ATP.

It belongs to the class-II aminoacyl-tRNA synthetase family. Homodimer.

It is found in the cytoplasm. The catalysed reaction is tRNA(Gly) + glycine + ATP = glycyl-tRNA(Gly) + AMP + diphosphate. It carries out the reaction 2 ATP + H(+) = P(1),P(4)-bis(5'-adenosyl) tetraphosphate + diphosphate. Functionally, catalyzes the ATP-dependent ligation of glycine to the 3'-end of its cognate tRNA, via the formation of an aminoacyl-adenylate intermediate (Gly-AMP). Also produces diadenosine tetraphosphate (Ap4A), a universal pleiotropic signaling molecule needed for cell regulation pathways, by direct condensation of 2 ATPs. Thereby, may play a special role in Ap4A homeostasis. The chain is Putative glycine--tRNA ligase (grs1) from Schizosaccharomyces pombe (strain 972 / ATCC 24843) (Fission yeast).